A 133-amino-acid chain; its full sequence is Large ribosomal subunit protein uL16c (133 aa).

The protein belongs to the universal ribosomal protein uL16 family. In terms of assembly, part of the 50S ribosomal subunit.

The protein resides in the plastid. This chain is Large ribosomal subunit protein uL16c, found in Euglena longa (Euglenophycean alga).